Reading from the N-terminus, the 680-residue chain is Oligopeptidase A (680 aa).

His-469 serves as a coordination point for Zn(2+). Glu-470 is a catalytic residue. His-473 and His-476 together coordinate Zn(2+).

This sequence belongs to the peptidase M3 family. Requires Zn(2+) as cofactor.

The catalysed reaction is Hydrolysis of oligopeptides, with broad specificity. Gly or Ala commonly occur as P1 or P1' residues, but more distant residues are also important, as is shown by the fact that Z-Gly-Pro-Gly-|-Gly-Pro-Ala is cleaved, but not Z-(Gly)(5).. May play a specific role in the degradation of signal peptides after they are released from precursor forms of secreted proteins. Can cleave N-acetyl-L-Ala(4). The sequence is that of Oligopeptidase A (prlC) from Salmonella typhimurium (strain LT2 / SGSC1412 / ATCC 700720).